Reading from the N-terminus, the 732-residue chain is Guanylate cyclase soluble subunit alpha-2 (732 aa).

A disordered region spans residues 1-58 (MSRRKISSESFSSLGSDYLETSPEEEGECPLSRLCWNGSRSPPGPLEPSPAAAAAAAA). The span at 49-58 (SPAAAAAAAA) shows a compositional bias: low complexity. The Guanylate cyclase domain occupies 521-648 (TMLFSDIVGF…NNVTLASKFE (128 aa)).

Belongs to the adenylyl cyclase class-4/guanylyl cyclase family. As to quaternary structure, heterodimer of an alpha and a beta chain. In terms of tissue distribution, isoform 1 is expressed in fetal brain, liver, colon, endothelium and testis. Isoform 2 is expressed only in liver, colon and endothelium.

Its subcellular location is the cytoplasm. It carries out the reaction GTP = 3',5'-cyclic GMP + diphosphate. With respect to regulation, activated by nitric oxide in the presence of magnesium or manganese ions. Functionally, has guanylyl cyclase on binding to the beta-1 subunit. Isoform 2 acts as a negative regulator of guanylyl cyclase activity as it forms non-functional heterodimers with the beta subunits. The sequence is that of Guanylate cyclase soluble subunit alpha-2 (GUCY1A2) from Homo sapiens (Human).